The primary structure comprises 122 residues: MTTDSVTQGVAHSVNGRLPELDFENRPSGAKLGIFDLPKLEVSVAPFTLAHIRVPGGVTTAEDHHEVREIWLVQSGSGILTLDGVRSRVRAGDTLYYESYRRHQLHNDGDSPVEIVSIWWRP.

The tract at residues 55-119 is cupin 2 conserved barrel; that stretch reads PGGVTTAEDH…DSPVEIVSIW (65 aa). Residues D63, H65, E69, and H103 each coordinate Zn(2+).

The cofactor is Zn(2+).

It catalyses the reaction N(6)-hydroxy-L-lysine + L-glutamate + ATP = 1-L-glutamo-2-N(6-)L-lysinohydrazine + AMP + diphosphate + 2 H(+). Inhibited by 1,10-phenanthroline (OP). Its function is as follows. Catalyzes hydrazine (N-N) bond formation from an unstable ester intermediate, the product of the ATP-dependent condensation of L-N(6)-OH-lysine and L-glutamine substrates by a methionyl-tRNA synthase-like protein. The protein is Cupin 2 conserved barrel domain-containing protein of Rhodococcus jostii (strain RHA1).